We begin with the raw amino-acid sequence, 1042 residues long: Isoleucine--tRNA ligase (1042 aa).

A 'HIGH' region motif is present at residues 48–58 (PFATGLPHFGH). The 'KMSKS' region signature appears at 594–598 (KMSKS). ATP is bound at residue Lys-597.

This sequence belongs to the class-I aminoacyl-tRNA synthetase family. IleS type 2 subfamily. In terms of assembly, monomer. Zn(2+) is required as a cofactor.

The protein resides in the cytoplasm. The catalysed reaction is tRNA(Ile) + L-isoleucine + ATP = L-isoleucyl-tRNA(Ile) + AMP + diphosphate. Catalyzes the attachment of isoleucine to tRNA(Ile). As IleRS can inadvertently accommodate and process structurally similar amino acids such as valine, to avoid such errors it has two additional distinct tRNA(Ile)-dependent editing activities. One activity is designated as 'pretransfer' editing and involves the hydrolysis of activated Val-AMP. The other activity is designated 'posttransfer' editing and involves deacylation of mischarged Val-tRNA(Ile). The sequence is that of Isoleucine--tRNA ligase from Borrelia garinii subsp. bavariensis (strain ATCC BAA-2496 / DSM 23469 / PBi) (Borreliella bavariensis).